The primary structure comprises 651 residues: Acetyl-coenzyme A synthetase (651 aa).

Residues 190–193 (RRGK) and Thr-311 contribute to the CoA site. ATP is bound by residues 387 to 389 (GEP), 411 to 416 (DTWWQT), Asp-508, and Arg-523. CoA is bound at residue Ser-531. Arg-534 contributes to the ATP binding site. Mg(2+) contacts are provided by Val-545, His-547, and Val-550. Lys-617 carries the post-translational modification N6-acetyllysine.

This sequence belongs to the ATP-dependent AMP-binding enzyme family. It depends on Mg(2+) as a cofactor. Acetylated. Deacetylation by the SIR2-homolog deacetylase activates the enzyme.

It catalyses the reaction acetate + ATP + CoA = acetyl-CoA + AMP + diphosphate. Catalyzes the conversion of acetate into acetyl-CoA (AcCoA), an essential intermediate at the junction of anabolic and catabolic pathways. AcsA undergoes a two-step reaction. In the first half reaction, AcsA combines acetate with ATP to form acetyl-adenylate (AcAMP) intermediate. In the second half reaction, it can then transfer the acetyl group from AcAMP to the sulfhydryl group of CoA, forming the product AcCoA. The protein is Acetyl-coenzyme A synthetase of Mycobacterium bovis (strain ATCC BAA-935 / AF2122/97).